Here is a 500-residue protein sequence, read N- to C-terminus: NAD(P)H-quinone oxidoreductase subunit 2 B, chloroplastic (500 aa).

A run of 13 helical transmembrane segments spans residues 14 to 34, 41 to 61, 78 to 98, 116 to 136, 166 to 186, 211 to 231, 242 to 262, 277 to 297, 305 to 325, 335 to 355, 376 to 396, 409 to 429, and 467 to 487; these read SILPECILISSLIIILLIDLT, WLYFISLTSLIISITVLLFQL, FNGIFRISIAFSSLLCIPLSM, LTATIGGMFLCGANDLIIIFI, LLMGGASSSILAYGFSWLYGL, ISIVLIFIIAGIAFKLSLVPF, APTSVIAFFSVTSKIAGLALA, WHLILEIIAILSMILGNFIAI, MLAYSSISQIGYFMIGVIAGD, YMLFYIFMNLGTFACITLFGL, ASFLALSLLSLGGIPPLAGFF, GLYLSVSVGLFTSVISIYYYL, and IIICVIGSTFSGIVINPVIAI.

Belongs to the complex I subunit 2 family. In terms of assembly, NDH is composed of at least 16 different subunits, 5 of which are encoded in the nucleus.

It is found in the plastid. It localises to the chloroplast thylakoid membrane. It carries out the reaction a plastoquinone + NADH + (n+1) H(+)(in) = a plastoquinol + NAD(+) + n H(+)(out). It catalyses the reaction a plastoquinone + NADPH + (n+1) H(+)(in) = a plastoquinol + NADP(+) + n H(+)(out). In terms of biological role, NDH shuttles electrons from NAD(P)H:plastoquinone, via FMN and iron-sulfur (Fe-S) centers, to quinones in the photosynthetic chain and possibly in a chloroplast respiratory chain. The immediate electron acceptor for the enzyme in this species is believed to be plastoquinone. Couples the redox reaction to proton translocation, and thus conserves the redox energy in a proton gradient. The chain is NAD(P)H-quinone oxidoreductase subunit 2 B, chloroplastic from Anthoceros angustus (Hornwort).